The chain runs to 126 residues: Bleomycin resistance protein (126 aa).

The 119-residue stretch at 1–119 folds into the VOC domain; the sequence is MTDQATPNLP…DGTLLRLIQN (119 aa).

It belongs to the bleomycin resistance protein family.

Binding protein with a strong affinity to the bleomycin family of antibiotics. Binds to CL990; an antimitotic-antibiotic compound. The polypeptide is Bleomycin resistance protein (ble) (Klebsiella pneumoniae).